The sequence spans 118 residues: Large ribosomal subunit protein uL18 (118 aa).

Belongs to the universal ribosomal protein uL18 family. Part of the 50S ribosomal subunit; part of the 5S rRNA/L5/L18/L25 subcomplex. Contacts the 5S and 23S rRNAs.

This is one of the proteins that bind and probably mediate the attachment of the 5S RNA into the large ribosomal subunit, where it forms part of the central protuberance. The chain is Large ribosomal subunit protein uL18 from Acidobacterium capsulatum (strain ATCC 51196 / DSM 11244 / BCRC 80197 / JCM 7670 / NBRC 15755 / NCIMB 13165 / 161).